Reading from the N-terminus, the 143-residue chain is uncharacterized protein (143 aa).

4 consecutive transmembrane segments (helical) span residues 7–29, 52–74, 87–105, and 120–142; these read LFLF…LSLV, FSLY…NTYL, LGVF…LWAG, and WLGI…IRLG.

It is found in the cell membrane. This is an uncharacterized protein from Aquifex aeolicus (strain VF5).